The sequence spans 80 residues: MPEQREKRKKEESDVVRAEGVVEEALPNTTFRVKLDSGHDILAYISGKMRIHYIRILPGDRVVLEISPYDTSRGRIVYRK.

The region spanning 6-80 (EKRKKEESDV…TSRGRIVYRK (75 aa)) is the S1-like domain.

It belongs to the IF-1 family. In terms of assembly, component of the 30S ribosomal translation pre-initiation complex which assembles on the 30S ribosome in the order IF-2 and IF-3, IF-1 and N-formylmethionyl-tRNA(fMet); mRNA recruitment can occur at any time during PIC assembly.

Its subcellular location is the cytoplasm. Functionally, one of the essential components for the initiation of protein synthesis. Stabilizes the binding of IF-2 and IF-3 on the 30S subunit to which N-formylmethionyl-tRNA(fMet) subsequently binds. Helps modulate mRNA selection, yielding the 30S pre-initiation complex (PIC). Upon addition of the 50S ribosomal subunit IF-1, IF-2 and IF-3 are released leaving the mature 70S translation initiation complex. This chain is Translation initiation factor IF-1, found in Deinococcus geothermalis (strain DSM 11300 / CIP 105573 / AG-3a).